The primary structure comprises 533 residues: D-3-phosphoglycerate dehydrogenase (533 aa).

Position 2 is an N-acetylalanine (Ala2). Phosphoserine is present on Ser14. Lys21 carries the post-translational modification N6-acetyllysine; alternate. Lys21 is covalently cross-linked (Glycyl lysine isopeptide (Lys-Gly) (interchain with G-Cter in SUMO1); alternate). Lys21 participates in a covalent cross-link: Glycyl lysine isopeptide (Lys-Gly) (interchain with G-Cter in SUMO2); alternate. An N6-acetyllysine modification is found at Lys58. Residues Thr78, 155 to 156 (RI), Asp175, Thr207, 234 to 236 (CAR), and Asp260 contribute to the NAD(+) site. At Thr78 the chain carries Phosphothreonine. The active site involves Arg236. Glu265 is a catalytic residue. His283 serves as the catalytic Proton donor. 283-286 (HLGA) provides a ligand contact to NAD(+).

This sequence belongs to the D-isomer specific 2-hydroxyacid dehydrogenase family. In terms of assembly, homotetramer.

The enzyme catalyses (2R)-3-phosphoglycerate + NAD(+) = 3-phosphooxypyruvate + NADH + H(+). It carries out the reaction (R)-2-hydroxyglutarate + NAD(+) = 2-oxoglutarate + NADH + H(+). It catalyses the reaction (S)-malate + NAD(+) = oxaloacetate + NADH + H(+). Its pathway is amino-acid biosynthesis; L-serine biosynthesis; L-serine from 3-phospho-D-glycerate: step 1/3. Catalyzes the reversible oxidation of 3-phospho-D-glycerate to 3-phosphonooxypyruvate, the first step of the phosphorylated L-serine biosynthesis pathway. Also catalyzes the reversible oxidation of 2-hydroxyglutarate to 2-oxoglutarate and the reversible oxidation of (S)-malate to oxaloacetate. In Pongo abelii (Sumatran orangutan), this protein is D-3-phosphoglycerate dehydrogenase (PHGDH).